The primary structure comprises 117 residues: Flagellar transcriptional regulator FlhD (117 aa).

Belongs to the FlhD family. As to quaternary structure, homodimer; disulfide-linked. Forms a heterohexamer composed of two FlhC and four FlhD subunits. Each FlhC binds a FlhD dimer, forming a heterotrimer, and a hexamer assembles by dimerization of two heterotrimers.

It is found in the cytoplasm. Functionally, functions in complex with FlhC as a master transcriptional regulator that regulates transcription of several flagellar and non-flagellar operons by binding to their promoter region. Activates expression of class 2 flagellar genes, including fliA, which is a flagellum-specific sigma factor that turns on the class 3 genes. Also regulates genes whose products function in a variety of physiological pathways. The protein is Flagellar transcriptional regulator FlhD of Photorhabdus laumondii subsp. laumondii (strain DSM 15139 / CIP 105565 / TT01) (Photorhabdus luminescens subsp. laumondii).